Consider the following 98-residue polypeptide: Protein S100-A13 (98 aa).

Residues 18–53 (TTFFTFARQEGRKDSLSVNEFKELVTQQLPHLLKDV) enclose the EF-hand domain. Positions 32, 37, 64, 66, 68, 70, and 75 each coordinate Ca(2+). Residue serine 32 is modified to Phosphoserine.

It belongs to the S-100 family. As to quaternary structure, homodimer. Part of a copper-dependent multiprotein complex containing S100A13, FGF1 and SYT1. Interacts with FGF1 and SYT1. Interacts with IL1A. As to expression, expressed in heart and skeletal muscle.

It is found in the cytoplasm. The protein resides in the secreted. Its function is as follows. Plays a role in the export of proteins that lack a signal peptide and are secreted by an alternative pathway. Binds two calcium ions per subunit. Binds one copper ion. Binding of one copper ion does not interfere with calcium binding. Required for the copper-dependent stress-induced export of IL1A and FGF1. The calcium-free protein binds to lipid vesicles containing phosphatidylserine, but not to vesicles containing phosphatidylcholine. In Homo sapiens (Human), this protein is Protein S100-A13 (S100A13).